Consider the following 380-residue polypeptide: uncharacterized protein (380 aa).

Transmembrane regions (helical) follow at residues L15–P35, L45–F65, I75–T95, L98–F118, I123–Y143, I182–I202, M217–L237, G303–I323, and L341–L361.

Its subcellular location is the cell membrane. This is an uncharacterized protein from Methanocaldococcus jannaschii (strain ATCC 43067 / DSM 2661 / JAL-1 / JCM 10045 / NBRC 100440) (Methanococcus jannaschii).